A 256-amino-acid polypeptide reads, in one-letter code: Isoprenyl transferase (256 aa).

Residue Asp-33 is part of the active site. Residue Asp-33 coordinates Mg(2+). Substrate-binding positions include 34–37 (GNGR), Trp-38, Arg-46, His-50, and 78–80 (STE). The active-site Proton acceptor is the Asn-81. Residues Trp-82, Arg-84, Arg-201, and 207–209 (RIS) each bind substrate. Glu-220 lines the Mg(2+) pocket.

This sequence belongs to the UPP synthase family. In terms of assembly, homodimer. Mg(2+) is required as a cofactor.

Its function is as follows. Catalyzes the condensation of isopentenyl diphosphate (IPP) with allylic pyrophosphates generating different type of terpenoids. This Staphylococcus aureus (strain Mu50 / ATCC 700699) protein is Isoprenyl transferase.